The sequence spans 126 residues: Holo-[acyl-carrier-protein] synthase (126 aa).

2 residues coordinate Mg(2+): Asp-9 and Glu-57.

It belongs to the P-Pant transferase superfamily. AcpS family. Mg(2+) serves as cofactor.

The protein resides in the cytoplasm. The enzyme catalyses apo-[ACP] + CoA = holo-[ACP] + adenosine 3',5'-bisphosphate + H(+). Transfers the 4'-phosphopantetheine moiety from coenzyme A to a Ser of acyl-carrier-protein. This is Holo-[acyl-carrier-protein] synthase from Pseudoalteromonas atlantica (strain T6c / ATCC BAA-1087).